Here is a 215-residue protein sequence, read N- to C-terminus: Cytochrome b6 (215 aa).

Residues 32–52 traverse the membrane as a helical segment; it reads IFYCLGGITLTCFLVQVASGF. Residue C35 coordinates heme c. Heme b contacts are provided by H86 and H100. A run of 3 helical transmembrane segments spans residues 90–110, 116–136, and 186–206; these read ASMM…TGGF, LTWV…VTGY, and LHTF…FLMI. The heme b site is built by H187 and H202.

The protein belongs to the cytochrome b family. PetB subfamily. The 4 large subunits of the cytochrome b6-f complex are cytochrome b6, subunit IV (17 kDa polypeptide, PetD), cytochrome f and the Rieske protein, while the 4 small subunits are PetG, PetL, PetM and PetN. The complex functions as a dimer. Heme b serves as cofactor. Heme c is required as a cofactor.

The protein localises to the plastid. It localises to the chloroplast thylakoid membrane. In terms of biological role, component of the cytochrome b6-f complex, which mediates electron transfer between photosystem II (PSII) and photosystem I (PSI), cyclic electron flow around PSI, and state transitions. The protein is Cytochrome b6 of Anthoceros angustus (Hornwort).